We begin with the raw amino-acid sequence, 115 residues long: NADH-ubiquinone oxidoreductase chain 3 (115 aa).

3 helical membrane passes run 4–24 (LVTMLINTTLSFVLILIAFWL), 55–75 (FFLVAITFLLFDLEIALLLPM), and 86–106 (TMTLTAFILLSVLALGLAYEW).

It belongs to the complex I subunit 3 family. Core subunit of respiratory chain NADH dehydrogenase (Complex I) which is composed of 45 different subunits. Interacts with TMEM186. Interacts with TMEM242.

The protein localises to the mitochondrion inner membrane. The catalysed reaction is a ubiquinone + NADH + 5 H(+)(in) = a ubiquinol + NAD(+) + 4 H(+)(out). In terms of biological role, core subunit of the mitochondrial membrane respiratory chain NADH dehydrogenase (Complex I) which catalyzes electron transfer from NADH through the respiratory chain, using ubiquinone as an electron acceptor. Essential for the catalytic activity of complex I. In Nelsonia neotomodon (Diminutive woodrat), this protein is NADH-ubiquinone oxidoreductase chain 3.